We begin with the raw amino-acid sequence, 123 residues long: Ribosome-binding factor A (123 aa).

It belongs to the RbfA family. Monomer. Binds 30S ribosomal subunits, but not 50S ribosomal subunits or 70S ribosomes.

The protein localises to the cytoplasm. In terms of biological role, one of several proteins that assist in the late maturation steps of the functional core of the 30S ribosomal subunit. Associates with free 30S ribosomal subunits (but not with 30S subunits that are part of 70S ribosomes or polysomes). Required for efficient processing of 16S rRNA. May interact with the 5'-terminal helix region of 16S rRNA. In Ralstonia nicotianae (strain ATCC BAA-1114 / GMI1000) (Ralstonia solanacearum), this protein is Ribosome-binding factor A.